Reading from the N-terminus, the 106-residue chain is MHHFVPSISLFMASVSFSVFFSHLATSWECSFFRSESFCCKTLFSMVPLINSSFNLSVFLFFNAITSFNLRISCSLLFSSFCRIASVFNKASSWLTMLPPMAPLLS.

The signal sequence occupies residues 1-27 (MHHFVPSISLFMASVSFSVFFSHLATS). Residues 42 to 62 (TLFSMVPLINSSFNLSVFLFF) form a helical membrane-spanning segment.

It is found in the membrane. This is an uncharacterized protein from Saccharomyces cerevisiae (strain ATCC 204508 / S288c) (Baker's yeast).